The chain runs to 518 residues: GMP synthase [glutamine-hydrolyzing] (518 aa).

The Glutamine amidotransferase type-1 domain maps to 13 to 203 (KIIVLDFGSQ…ALNVCGCKGD (191 aa)). Cys-90 serves as the catalytic Nucleophile. Residues His-177 and Glu-179 contribute to the active site. Residues 204–393 (WTMENFSEVE…LGMPDAIVWR (190 aa)) enclose the GMPS ATP-PPase domain. ATP is bound at residue 231–237 (SGGVDSS).

In terms of assembly, homodimer.

It catalyses the reaction XMP + L-glutamine + ATP + H2O = GMP + L-glutamate + AMP + diphosphate + 2 H(+). The protein operates within purine metabolism; GMP biosynthesis; GMP from XMP (L-Gln route): step 1/1. Functionally, catalyzes the synthesis of GMP from XMP. This chain is GMP synthase [glutamine-hydrolyzing], found in Listeria monocytogenes serovar 1/2a (strain ATCC BAA-679 / EGD-e).